The sequence spans 162 residues: uncharacterized protein (162 aa).

5 consecutive transmembrane segments (helical) span residues 15-40, 47-66, 76-98, 105-124, and 128-150; these read TIYS…YFLL, ISML…TTAL, YSIL…FLVY, KWLG…DPLL, and GYAV…WLVI.

The protein localises to the cell membrane. This is an uncharacterized protein from Archaeoglobus fulgidus (strain ATCC 49558 / DSM 4304 / JCM 9628 / NBRC 100126 / VC-16).